The sequence spans 229 residues: MAIQQRDSRGGTNRDARTNRRIKAREVRAIGPEGEQLGVLPIEQALARAQELGMDLVEVSPMAKPPVCKIMDYGKFKYLEKKKQNEAKKKQVVVQLKEVKLRPRTEEHDYATKIKKVREFLGESNKARITVTFRGREMSHRELGQKVLQRIIEDLREVAVIEAAPRMEGRQMFMILAPNPRMLQAQRDRAKAAAQAAPAAAPQPGAPAAPPAAPAPAPAPEQTPEAGPR.

2 disordered regions span residues 1–21 and 184–229; these read MAIQ…TNRR and QAQR…AGPR. Low complexity predominate over residues 192–203; it reads AAAQAAPAAAPQ. Residues 204 to 221 show a composition bias toward pro residues; sequence PGAPAAPPAAPAPAPAPE.

The protein belongs to the IF-3 family. In terms of assembly, monomer.

It localises to the cytoplasm. IF-3 binds to the 30S ribosomal subunit and shifts the equilibrium between 70S ribosomes and their 50S and 30S subunits in favor of the free subunits, thus enhancing the availability of 30S subunits on which protein synthesis initiation begins. The sequence is that of Translation initiation factor IF-3 from Anaeromyxobacter sp. (strain Fw109-5).